Here is a 210-residue protein sequence, read N- to C-terminus: T-cell surface glycoprotein CD8 beta chain (210 aa).

The signal sequence occupies residues 1–21 (MRPRLWLLLAAQLTVLHGNSV). An Ig-like V-type domain is found at 22-132 (LQQTPAYIKV…ELTFGKGTQL (111 aa)). The Extracellular portion of the chain corresponds to 22–170 (LQQTPAYIKV…ETQKGPLCSP (149 aa)). A disulfide bridge connects residues Cys-41 and Cys-116. N-linked (GlcNAc...) asparagine glycosylation is present at Asn-102. The helical transmembrane segment at 171-191 (ITLGLLVAGVLVLLVSLGVAI) threads the bilayer. Over 192 to 210 (HLCCRRRRARLRFMKQFYK) the chain is Cytoplasmic. Position 209 is a phosphotyrosine (Tyr-209).

In terms of assembly, forms disulfide-linked heterodimers with CD8A at the cell surface. Interacts with CD3D; this interaction couples TCR-CD3 with CD8. Interacts with LCK. Post-translationally, phosphorylated as a consequence of T-cell activation. In terms of processing, palmitoylated at the cytoplasmic tail and thereby targets the heterodimer CD8A/CD8B to lipid rafts unlike CD8A homodimers. Isoform 1, isoform 3, isoform 5, isoform 6, isoform 7 and isoform 8 are expressed in both thymus and peripheral CD8+ T-cells. Expression of isoform 1 is higher in thymus CD8+ T-cells than in peripheral CD8+ T-cells. Expression of isoform 6 is higher in peripheral CD8+ T-cells than in thymus CD8+ T-cells.

The protein localises to the cell membrane. It localises to the secreted. Its function is as follows. Integral membrane glycoprotein that plays an essential role in the immune response and serves multiple functions in responses against both external and internal offenses. In T-cells, functions primarily as a coreceptor for MHC class I molecule:peptide complex. The antigens presented by class I peptides are derived from cytosolic proteins while class II derived from extracellular proteins. Interacts simultaneously with the T-cell receptor (TCR) and the MHC class I proteins presented by antigen presenting cells (APCs). In turn, recruits the Src kinase LCK to the vicinity of the TCR-CD3 complex. A palmitoylation site in the cytoplasmic tail of CD8B chain contributes to partitioning of CD8 into the plasma membrane lipid rafts where signaling proteins are enriched. Once LCK recruited, it initiates different intracellular signaling pathways by phosphorylating various substrates ultimately leading to lymphokine production, motility, adhesion and activation of cytotoxic T-lymphocytes (CTLs). Additionally, plays a critical role in thymic selection of CD8+ T-cells. The chain is T-cell surface glycoprotein CD8 beta chain (CD8B) from Homo sapiens (Human).